Consider the following 209-residue polypeptide: Probable GTP-binding protein EngB (209 aa).

One can recognise an EngB-type G domain in the interval threonine 22 to alanine 198. Mg(2+) is bound by residues serine 37 and threonine 59.

Belongs to the TRAFAC class TrmE-Era-EngA-EngB-Septin-like GTPase superfamily. EngB GTPase family. Requires Mg(2+) as cofactor.

In terms of biological role, necessary for normal cell division and for the maintenance of normal septation. The chain is Probable GTP-binding protein EngB from Neisseria meningitidis serogroup C (strain 053442).